The sequence spans 340 residues: DNA-directed RNA polymerase subunit alpha (340 aa).

The alpha N-terminal domain (alpha-NTD) stretch occupies residues 1 to 238 (MVDPIVTKNW…EQLSIFINFD (238 aa)). Positions 255 to 340 (LNENLFRSVD…AAPQGGAPKV (86 aa)) are alpha C-terminal domain (alpha-CTD).

The protein belongs to the RNA polymerase alpha chain family. In terms of assembly, homodimer. The RNAP catalytic core consists of 2 alpha, 1 beta, 1 beta' and 1 omega subunit. When a sigma factor is associated with the core the holoenzyme is formed, which can initiate transcription.

The catalysed reaction is RNA(n) + a ribonucleoside 5'-triphosphate = RNA(n+1) + diphosphate. Its function is as follows. DNA-dependent RNA polymerase catalyzes the transcription of DNA into RNA using the four ribonucleoside triphosphates as substrates. The protein is DNA-directed RNA polymerase subunit alpha of Anaeromyxobacter dehalogenans (strain 2CP-1 / ATCC BAA-258).